A 1428-amino-acid chain; its full sequence is DNA polymerase III PolC-type (1428 aa).

The Exonuclease domain occupies F414 to L570.

The protein belongs to the DNA polymerase type-C family. PolC subfamily.

It localises to the cytoplasm. It carries out the reaction DNA(n) + a 2'-deoxyribonucleoside 5'-triphosphate = DNA(n+1) + diphosphate. In terms of biological role, required for replicative DNA synthesis. This DNA polymerase also exhibits 3' to 5' exonuclease activity. In Oceanobacillus iheyensis (strain DSM 14371 / CIP 107618 / JCM 11309 / KCTC 3954 / HTE831), this protein is DNA polymerase III PolC-type.